Here is a 152-residue protein sequence, read N- to C-terminus: Large ribosomal subunit protein uL22 (152 aa).

Positions 124-143 are enriched in low complexity; sequence APTKAASKKAAPAKQTTPAA. Residues 124–152 form a disordered region; it reads APTKAASKKAAPAKQTTPAATESKTEGAE.

Belongs to the universal ribosomal protein uL22 family. As to quaternary structure, part of the 50S ribosomal subunit.

In terms of biological role, this protein binds specifically to 23S rRNA; its binding is stimulated by other ribosomal proteins, e.g. L4, L17, and L20. It is important during the early stages of 50S assembly. It makes multiple contacts with different domains of the 23S rRNA in the assembled 50S subunit and ribosome. The globular domain of the protein is located near the polypeptide exit tunnel on the outside of the subunit, while an extended beta-hairpin is found that lines the wall of the exit tunnel in the center of the 70S ribosome. This Salinispora arenicola (strain CNS-205) protein is Large ribosomal subunit protein uL22.